Reading from the N-terminus, the 407-residue chain is P2X receptor D (407 aa).

At 1 to 22 the chain is on the cytoplasmic side; the sequence is MDWDNIFSYNTAKIVTIKDRRL. Residues 23 to 43 traverse the membrane as a helical segment; that stretch reads GGLHIIFMVLIIVYIVIYSTI. At 44–300 the chain is on the lumenal side; sequence YKKGYLLTET…IQNGEIGSFN (257 aa). The pore-forming motif stretch occupies residues 283 to 296; it reads RHGIRLIFIQNGEI. Residues 301–321 traverse the membrane as a helical segment; the sequence is FQALLLTFVSGLGLLAISTVL. At 322 to 407 the chain is on the cytoplasmic side; that stretch reads VDQLAIRFLP…QNIQNNNIIL (86 aa). The segment at 371–394 is disordered; sequence KNNENNNNNDDYNDDDNEIFDDNN. The span at 381–391 shows a compositional bias: acidic residues; sequence DYNDDDNEIFD.

The protein belongs to the P2X receptor family.

It localises to the contractile vacuole membrane. Its function is as follows. P2X receptors are ligand-gated ion channels that play a role in intracellular calcium signaling. ATP does not evoke inward currents in p2xD. Not essential for osmoregulation. The protein is P2X receptor D (p2xD) of Dictyostelium discoideum (Social amoeba).